A 143-amino-acid chain; its full sequence is Large-conductance mechanosensitive channel (143 aa).

2 helical membrane passes run 10–30 (FAVKGNVMDLAVGVIIGGAFS) and 89–109 (GSFITVAINFVILAFIIFLMV).

It belongs to the MscL family. Homopentamer.

It is found in the cell inner membrane. In terms of biological role, channel that opens in response to stretch forces in the membrane lipid bilayer. May participate in the regulation of osmotic pressure changes within the cell. This chain is Large-conductance mechanosensitive channel, found in Burkholderia ambifaria (strain ATCC BAA-244 / DSM 16087 / CCUG 44356 / LMG 19182 / AMMD) (Burkholderia cepacia (strain AMMD)).